Here is a 40-residue protein sequence, read N- to C-terminus: Dihydrolipoyl dehydrogenase (40 aa).

Residue E36–T40 participates in FAD binding.

It belongs to the class-I pyridine nucleotide-disulfide oxidoreductase family. In terms of assembly, homodimer. Requires FAD as cofactor.

It localises to the mitochondrion matrix. The catalysed reaction is N(6)-[(R)-dihydrolipoyl]-L-lysyl-[protein] + NAD(+) = N(6)-[(R)-lipoyl]-L-lysyl-[protein] + NADH + H(+). In terms of biological role, lipoamide dehydrogenase is a component of the glycine cleavage system as well as of the alpha-ketoacid dehydrogenase complexes. The pyruvate dehydrogenase complex contains multiple copies of three enzymatic components: pyruvate dehydrogenase (E1), dihydrolipoamide acetyltransferase (E2) and lipoamide dehydrogenase (E3). This chain is Dihydrolipoyl dehydrogenase, found in Solanum tuberosum (Potato).